A 504-amino-acid polypeptide reads, in one-letter code: MSKKFTMTLLSSSLAGLLVMSGGVSAQEEKYTVPYAIGEGKWGNTYEVVKTGGNGNFRYEVKEKNGKKRSLFTFDSKGDVIINGSGITYTIHDGALNDFAQTAEKKKNGQSQSHRMTDSVVRDVYNKVYSLQRTKITGFSVEDGENGKVSLGSDAKASGEFSVAVGTGARADKKFATAVGSWAAADGKQSTALGVGAYAYANASTAAGTAAYVDGSAIYGTAIGNYAKVDENATEGTALGAKATVTNKNSVALGANSVTTRDNEVYIGYKTGTESDKTYGTRVLGGLSDGTRNSDAATVGQLNRKVGGVYDDVKARITVESEKQKKYTDQKTSEVNEKVEARTTVGVDSDGKLTRAEGATKTIAVNDGLVALSGRTDRIDYAVGAIDGRVTRNTQSIEKNSKAIAANTRTLQQHSARLDSQQRQINENHKEMKRAAAQSAALTGLFQPYSVGKFNATAAVGGYSDQQALAVGVGYRFNEQTAAKAGVAFSDGDASWNVGVNFEF.

Residues 1 to 26 (MSKKFTMTLLSSSLAGLLVMSGGVSA) form the signal peptide. The interval 27–413 (QEEKYTVPYA…IAANTRTLQQ (387 aa)) is surface exposed passenger domain. Topologically, residues 27–453 (QEEKYTVPYA…GLFQPYSVGK (427 aa)) are extracellular. The interval 154–280 (DAKASGEFSV…TGTESDKTYG (127 aa)) is head domain. The segment at 281–296 (TRVLGGLSDGTRNSDA) is neck. Residues 297-342 (ATVGQLNRKVGGVYDDVKARITVESEKQKKYTDQKTSEVNEKVEAR) are right-handed coiled-coil (RHcc). The interval 343 to 368 (TTVGVDSDGKLTRAEGATKTIAVNDG) is saddle domain. The left-handed coiled-coil (LHcc) stretch occupies residues 369-434 (LVALSGRTDR…INENHKEMKR (66 aa)). A coiled-coil region spans residues 411 to 438 (LQQHSARLDSQQRQINENHKEMKRAAAQ). The segment at 411–453 (LQQHSARLDSQQRQINENHKEMKRAAAQSAALTGLFQPYSVGK) is outer membrane translocation of the passenger domain. The next 4 membrane-spanning stretches (beta stranded) occupy residues 454–464 (FNATAAVGGYS), 467–478 (QALAVGVGYRFN), 481–490 (TAAKAGVAFS), and 494–504 (ASWNVGVNFEF). The tract at residues 454–504 (FNATAAVGGYSDQQALAVGVGYRFNEQTAAKAGVAFSDGDASWNVGVNFEF) is translocator domain.

This sequence belongs to the autotransporter-2 (AT-2) (TC 1.B.40) family. Eib subfamily. In terms of assembly, homotrimer; can probably form mixed heterotrimers in vivo. Will form mixed heterotrimers with EibD; these are correctly located in the outer membrane and bind IgG Fc, although less well than homotrimers. In denaturing gels runs as a band of about 200 kDa. Binds the Fc portion of immunoglobulins; binds more than 1 Fc per subunit.

It localises to the cell surface. The protein resides in the cell outer membrane. In terms of biological role, binds (in a non-immune fashion) to the Fc portion of human IgG and less well to IgA; binding occurs on the cell surface. Confers the ability to survive exposure to human serum exposure. Binds to the Fc portion of human IgG and IgA and to whole mouse antibodies also via Fc. In Escherichia coli, this protein is Immunoglobulin-binding protein EibC.